The primary structure comprises 825 residues: MWLQPSLSLSPTPTVGRSLCLTLGFLSLVLRASTQAPAPTVNTHFGKLRGARVPLPSEILGPVDQYLGVPYAAPPIGEKRFLPPEPPPSWSGIRNATHFPPVCPQNIHTAVPEVMLPVWFTANLDIVATYIQEPNEDCLYLNVYVPTEDGSGAKKQGEDLADNDGDEDEDIRDSGAKPVMVYIHGGSYMEGTGNMIDGSVLASYGNVIVITLNYRVGVLGFLSTGDQAAKGNYGLLDQIQALRWVSENIAFFGGDPRRITVFGSGIGASCVSLLTLSHHSEGLFQRAIIQSGSALSSWAVNYQPVKYTSLLADKVGCNVLDTVDMVDCLRQKSAKELVEQDIQPARYHVAFGPVIDGDVIPDDPEILMEQGEFLNYDIMLGVNQGEGLKFVEGVVDPEDGVSGTDFDYSVSNFVDNLYGYPEGKDTLRETIKFMYTDWADRDNPETRRKTLVALFTDHQWVEPSVVTADLHARYGSPTYFYAFYHHCQSLMKPAWSDAAHGDEVPYVFGVPMVGPTDLFPCNFSKNDVMLSAVVMTYWTNFAKTGDPNKPVPQDTKFIHTKANRFEEVAWSKYNPRDQLYLHIGLKPRVRDHYRATKVAFWKHLVPHLYNLHDMFHYTSTTTKVPPPDTTHSSHITRRPNGKTWSTKRPAISPAYSNENAPGSWNGDQDAGPLLVENPRDYSTELSVTIAVGASLLFLNVLAFAALYYRKDKRRQEPLRQPSPQRGTGAPELGTAPEEELAALQLGPTHHECEAGPPHDTLRLTALPDYTLTLRRSPDDIPLMTPNTITMIPNSLVGLQTLHPYNTFAAGFNSTGLPHSHSTTRV.

The first 34 residues, 1–34, serve as a signal peptide directing secretion; it reads MWLQPSLSLSPTPTVGRSLCLTLGFLSLVLRAST. Over 35–686 the chain is Extracellular; the sequence is QAPAPTVNTH…NPRDYSTELS (652 aa). N-linked (GlcNAc...) asparagine glycosylation is present at Asn-95. An intrachain disulfide couples Cys-103 to Cys-138. Residues 151–172 form a disordered region; that stretch reads SGAKKQGEDLADNDGDEDEDIR. Positions 159–171 are enriched in acidic residues; the sequence is DLADNDGDEDEDI. Disulfide bonds link Cys-317/Cys-328 and Cys-487/Cys-521. Asn-522 carries N-linked (GlcNAc...) asparagine glycosylation. Polar residues-rich tracts occupy residues 622-633 and 654-666; these read TKVPPPDTTHSS and AYSN…SWNG. Residues 622-668 are disordered; the sequence is TKVPPPDTTHSSHITRRPNGKTWSTKRPAISPAYSNENAPGSWNGDQ. Residues 687–707 form a helical membrane-spanning segment; that stretch reads VTIAVGASLLFLNVLAFAALY. The Cytoplasmic segment spans residues 708 to 825; it reads YRKDKRRQEP…LPHSHSTTRV (118 aa). Residue Ser-722 is modified to Phosphoserine. Tyr-769 bears the Phosphotyrosine mark.

The protein belongs to the type-B carboxylesterase/lipase family. In terms of assembly, homodimer, and heterodimer with NLGN1 and NLGN2. Interacts with neurexins NRXN1, NRXN2 and NRXN3. Interaction with neurexins is mediated by heparan sulfate glycan modification on neurexin. Interacts (via its C-terminus) with DLG4/PSD-95 (via PDZ domain 3). As to expression, brain and arteries (at protein level). Detected in heart, brain, spleen, lung, liver, skeletal muscle, kidney and testis. Expressed in olfactory bulb and olfactory epithelium. Found in olfactory ensheathing glia but not in olfactory neurons, and in developing peripheral glia.

Its subcellular location is the cell membrane. The protein localises to the synapse. Its function is as follows. Cell surface protein involved in cell-cell-interactions via its interactions with neurexin family members. Plays a role in synapse function and synaptic signal transmission, and probably mediates its effects by recruiting and clustering other synaptic proteins. May promote the initial formation of synapses, but is not essential for this. May also play a role in glia-glia or glia-neuron interactions in the developing peripheral nervous system. This is Neuroligin-3 (Nlgn3) from Mus musculus (Mouse).